The sequence spans 77 residues: MMSKLGVLLTICLLLFPLFALPQDGDQPADRPAERMQDDISSEQNSLLEKRVTDRCCKGKRECGRWCRDHSRCCGRR.

An N-terminal signal peptide occupies residues 1-22; it reads MMSKLGVLLTICLLLFPLFALP. A propeptide spanning residues 23-51 is cleaved from the precursor; that stretch reads QDGDQPADRPAERMQDDISSEQNSLLEKR. A disordered region spans residues 26-46; the sequence is DQPADRPAERMQDDISSEQNS. The span at 28 to 38 shows a compositional bias: basic and acidic residues; the sequence is PADRPAERMQD. 3 cysteine pairs are disulfide-bonded: C56–C67, C57–C73, and C63–C74. At C74 the chain carries Cysteine amide.

This sequence belongs to the conotoxin M superfamily. Expressed by the venom duct.

It is found in the secreted. In terms of biological role, mu-conotoxins block voltage-gated sodium channels (Nav). This synthetic toxin potently blocks rNav1.2/SCN2A, and rNav1.4/SCN4A. It also moderately blocks rNav1.1/SCN1A, rNav1.3/SCN3A, rNav1.5/SCN5A, and mNav1.6/SCN8A. The inhibition is reversible. This is Mu-conotoxin BuIIIA from Conus bullatus (Bubble cone).